We begin with the raw amino-acid sequence, 148 residues long: Cytochrome c-552 (148 aa).

An N-terminal signal peptide occupies residues 1 to 17 (MKRTLMAFLLLGGLALA). Gln-18 carries the post-translational modification Pyrrolidone carboxylic acid. Positions 28, 31, 32, and 86 each coordinate heme c.

Post-translationally, binds 1 heme c group covalently per subunit.

In terms of biological role, this monoheme basic protein appears to function as an electron donor to cytochrome oxidase in T.thermophilus. The chain is Cytochrome c-552 (cycA) from Thermus thermophilus (strain ATCC 27634 / DSM 579 / HB8).